A 723-amino-acid polypeptide reads, in one-letter code: Fatty acid oxidation complex subunit alpha (723 aa).

An enoyl-CoA hydratase/isomerase region spans residues 1-189 (MIYQAETLQV…KIGLLDAVVD (189 aa)). D296 serves as a coordination point for substrate. Residues 311-723 (SKDTQRAAVL…FYGAQQQGSI (413 aa)) are 3-hydroxyacyl-CoA dehydrogenase. NAD(+) is bound by residues M325, D344, 401-403 (VVE), K408, and S430. The For 3-hydroxyacyl-CoA dehydrogenase activity role is filled by H451. N454 provides a ligand contact to NAD(+). Residues N501 and Y661 each coordinate substrate.

It in the N-terminal section; belongs to the enoyl-CoA hydratase/isomerase family. In the C-terminal section; belongs to the 3-hydroxyacyl-CoA dehydrogenase family. In terms of assembly, heterotetramer of two alpha chains (FadB) and two beta chains (FadA).

The catalysed reaction is a (3S)-3-hydroxyacyl-CoA + NAD(+) = a 3-oxoacyl-CoA + NADH + H(+). It catalyses the reaction a (3S)-3-hydroxyacyl-CoA = a (2E)-enoyl-CoA + H2O. It carries out the reaction a 4-saturated-(3S)-3-hydroxyacyl-CoA = a (3E)-enoyl-CoA + H2O. The enzyme catalyses (3S)-3-hydroxybutanoyl-CoA = (3R)-3-hydroxybutanoyl-CoA. The catalysed reaction is a (3Z)-enoyl-CoA = a 4-saturated (2E)-enoyl-CoA. It catalyses the reaction a (3E)-enoyl-CoA = a 4-saturated (2E)-enoyl-CoA. The protein operates within lipid metabolism; fatty acid beta-oxidation. Functionally, involved in the aerobic and anaerobic degradation of long-chain fatty acids via beta-oxidation cycle. Catalyzes the formation of 3-oxoacyl-CoA from enoyl-CoA via L-3-hydroxyacyl-CoA. It can also use D-3-hydroxyacyl-CoA and cis-3-enoyl-CoA as substrate. This Vibrio campbellii (strain ATCC BAA-1116) protein is Fatty acid oxidation complex subunit alpha.